The primary structure comprises 467 residues: tRNA(Ile)-lysidine synthase (467 aa).

Position 35–40 (serine 35–serine 40) interacts with ATP.

It belongs to the tRNA(Ile)-lysidine synthase family.

It localises to the cytoplasm. The catalysed reaction is cytidine(34) in tRNA(Ile2) + L-lysine + ATP = lysidine(34) in tRNA(Ile2) + AMP + diphosphate + H(+). In terms of biological role, ligates lysine onto the cytidine present at position 34 of the AUA codon-specific tRNA(Ile) that contains the anticodon CAU, in an ATP-dependent manner. Cytidine is converted to lysidine, thus changing the amino acid specificity of the tRNA from methionine to isoleucine. This is tRNA(Ile)-lysidine synthase from Caldanaerobacter subterraneus subsp. tengcongensis (strain DSM 15242 / JCM 11007 / NBRC 100824 / MB4) (Thermoanaerobacter tengcongensis).